The following is a 292-amino-acid chain: ATP synthase gamma chain (292 aa).

The protein belongs to the ATPase gamma chain family. F-type ATPases have 2 components, CF(1) - the catalytic core - and CF(0) - the membrane proton channel. CF(1) has five subunits: alpha(3), beta(3), gamma(1), delta(1), epsilon(1). CF(0) has three main subunits: a, b and c.

It localises to the cell inner membrane. In terms of biological role, produces ATP from ADP in the presence of a proton gradient across the membrane. The gamma chain is believed to be important in regulating ATPase activity and the flow of protons through the CF(0) complex. This is ATP synthase gamma chain from Hyphomonas neptunium (strain ATCC 15444).